A 276-amino-acid chain; its full sequence is Rhomboid protease GlpG (276 aa).

The next 6 helical transmembrane spans lie at 94–114, 142–162, 169–189, 192–212, 229–249, and 250–270; these read GPVT…MQIL, ALMH…WYLG, LGSG…GYVQ, FSGP…GYVW, LIIF…GMSM, and ANGA…VDSL. S201 (nucleophile) is an active-site residue. The active site involves H254.

This sequence belongs to the peptidase S54 family.

Its subcellular location is the cell inner membrane. The catalysed reaction is Cleaves type-1 transmembrane domains using a catalytic dyad composed of serine and histidine that are contributed by different transmembrane domains.. In terms of biological role, rhomboid-type serine protease that catalyzes intramembrane proteolysis. In Shigella flexneri serotype 5b (strain 8401), this protein is Rhomboid protease GlpG.